Here is a 416-residue protein sequence, read N- to C-terminus: Creatine kinase U-type, mitochondrial (416 aa).

Residues 1-39 (MAGPFSRLLSARPGLRLLALAGAGSLAAGFLLRSEPVRA) constitute a mitochondrion transit peptide. Residues 40–64 (ASERRRLYPPSAEYPDLRKHNNCMA) form a cardiolipin-binding region. A Phosphagen kinase N-terminal domain is found at 45 to 131 (RLYPPSAEYP…FDPVIQERHN (87 aa)). Ser151 bears the Phosphoserine mark. The Phosphagen kinase C-terminal domain occupies 158-400 (YVLSSRVRTG…NFLIDCERRL (243 aa)). 161-165 (SSRVR) is a binding site for ATP. Ser196 carries the post-translational modification Phosphoserine. Thr213 carries the post-translational modification Phosphothreonine. His224 contributes to the ATP binding site. Ser232 is modified (phosphoserine). Residues Arg269, Arg325, and 353–358 (RGTGGV) contribute to the ATP site. At Thr355 the chain carries Phosphothreonine. Position 365 is a phosphoserine (Ser365). Residue Asp368 participates in ATP binding.

This sequence belongs to the ATP:guanido phosphotransferase family. Exists as an octamer composed of four MTCK homodimers.

Its subcellular location is the mitochondrion inner membrane. The catalysed reaction is creatine + ATP = N-phosphocreatine + ADP + H(+). Reversibly catalyzes the transfer of phosphate between ATP and various phosphogens (e.g. creatine phosphate). Creatine kinase isoenzymes play a central role in energy transduction in tissues with large, fluctuating energy demands, such as skeletal muscle, heart, brain and spermatozoa. The sequence is that of Creatine kinase U-type, mitochondrial (CKMT1) from Bos taurus (Bovine).